A 431-amino-acid polypeptide reads, in one-letter code: COBRA-like protein 4 (431 aa).

The signal sequence occupies residues Met1 to Ala20. N-linked (GlcNAc...) asparagine glycosylation is found at Asn29, Asn154, Asn162, Asn201, Asn226, Asn306, Asn321, and Asn340. Asn414 carries the GPI-anchor amidated asparagine lipid modification. Positions Phe415 to Trp431 are cleaved as a propeptide — removed in mature form.

The protein belongs to the COBRA family. Expressed in roots, stems, leaves, flowers and siliques.

It is found in the cell membrane. This chain is COBRA-like protein 4 (COBL4), found in Arabidopsis thaliana (Mouse-ear cress).